Reading from the N-terminus, the 40-residue chain is Beta-defensin 1 (40 aa).

3 disulfides stabilise this stretch: Cys7–Cys35, Cys14–Cys29, and Cys19–Cys36. Residue Gly40 is modified to Glycine amide.

Monomer. Homodimer.

The protein localises to the secreted. It is found in the membrane. Functionally, has antimicrobial activity against the Gram-positive bacteria methicillin-resistant S.aureus ATCC 33591 and L.monocytogenes EGD, the Gram-negative bacterium E.coli ML53p and the yeast C.albicans 820. Has no hemolytic activity towards human erythrocytes. The polypeptide is Beta-defensin 1 (Emys orbicularis (European pond turtle)).